We begin with the raw amino-acid sequence, 351 residues long: uncharacterized protein (351 aa).

Residues aspartate 215, aspartate 226, histidine 290, glutamate 319, and glutamate 333 each contribute to the Mn(2+) site.

Belongs to the peptidase M24B family. It depends on Mn(2+) as a cofactor.

This is an uncharacterized protein from Staphylococcus aureus (strain MRSA252).